The primary structure comprises 110 residues: Replication initiation control protein YabA (110 aa).

Zn(2+) contacts are provided by histidine 84, cysteine 86, cysteine 100, and cysteine 103.

Belongs to the YabA family. Homotetramer. Interacts with both DnaA and DnaN, acting as a bridge between these two proteins. Zn(2+) is required as a cofactor.

It is found in the cytoplasm. The protein resides in the nucleoid. Involved in control of chromosome replication initiation. Inhibits the cooperative binding of DnaA to the oriC region, thus negatively regulating initiation of chromosome replication. Inhibits the ability of DnaA-ATP to form a helix on DNA; does not disassemble preformed DnaA-DNA helices. Decreases the residence time of DnaA on the chromosome at its binding sites (oriC, replication forks and promoter-binding sites). Tethers DnaA to the replication machinery via the DNA polymerase beta sliding clamp subunit (dnaN). Associates with oriC and other DnaA targets on the chromosome in a DnaA-dependent manner. This chain is Replication initiation control protein YabA, found in Streptococcus mutans serotype c (strain ATCC 700610 / UA159).